A 272-amino-acid polypeptide reads, in one-letter code: NAD kinase (272 aa).

Catalysis depends on Asp62, which acts as the Proton acceptor. NAD(+) contacts are provided by residues Asp62–Gly63, Arg67, Asn129–Glu130, Arg140, Lys157, Asp159, Ile167, Ser170–Ser175, Ala194, and Gln229.

It belongs to the NAD kinase family. A divalent metal cation is required as a cofactor.

It localises to the cytoplasm. It carries out the reaction NAD(+) + ATP = ADP + NADP(+) + H(+). Functionally, involved in the regulation of the intracellular balance of NAD and NADP, and is a key enzyme in the biosynthesis of NADP. Catalyzes specifically the phosphorylation on 2'-hydroxyl of the adenosine moiety of NAD to yield NADP. This is NAD kinase from Thermoplasma acidophilum (strain ATCC 25905 / DSM 1728 / JCM 9062 / NBRC 15155 / AMRC-C165).